The chain runs to 372 residues: Serine protease inhibitor 42Dd (372 aa).

The N-terminal stretch at 1-15 is a signal peptide; sequence MYYLCIFLWVTSVAC. Residues N197 and N232 are each glycosylated (N-linked (GlcNAc...) asparagine).

It belongs to the serpin family. As to expression, expressed in the ovary.

The protein resides in the secreted. Serine protease inhibitor with activity toward trypsin. Involved in innate immunity to fungal infection by negatively regulating the Toll signaling pathway and suppressing the expression of the antifungal peptide drosomycin. Acts upstream of SPE and grass, and downstream of the fungal cell wall pattern recognition receptor GNBP3. May function specifically in the GNBP3-dependent beta-1,3-glucan branch of the Toll pathway. The polypeptide is Serine protease inhibitor 42Dd (Drosophila melanogaster (Fruit fly)).